We begin with the raw amino-acid sequence, 827 residues long: Periplasmic nitrate reductase (827 aa).

A signal peptide (tat-type signal) is located at residues 1–32 (MELNRRDFMKANAAMAAAAAAGMTIPVKNVYA). Residues 37-93 (IRWDKAPCRFCGTGCSVLVGTKDGRVVATQGDPDAEVNRGLNCIKGYFLSKIMYGAD) enclose the 4Fe-4S Mo/W bis-MGD-type domain. Residues cysteine 44, cysteine 47, cysteine 51, and cysteine 79 each contribute to the [4Fe-4S] cluster site. Mo-bis(molybdopterin guanine dinucleotide)-binding positions include lysine 81, glutamine 148, asparagine 173, cysteine 177, 210–217 (WGSNMAEM), 241–245 (STFEH), methionine 371, glutamine 375, asparagine 481, 507–508 (SD), lysine 530, aspartate 557, and 717–726 (TGRVLEHWHT). Residue phenylalanine 793 coordinates substrate. Residues asparagine 801 and lysine 818 each contribute to the Mo-bis(molybdopterin guanine dinucleotide) site.

Belongs to the prokaryotic molybdopterin-containing oxidoreductase family. NasA/NapA/NarB subfamily. In terms of assembly, component of the periplasmic nitrate reductase NapAB complex composed of NapA and NapB. It depends on [4Fe-4S] cluster as a cofactor. Mo-bis(molybdopterin guanine dinucleotide) is required as a cofactor. In terms of processing, predicted to be exported by the Tat system. The position of the signal peptide cleavage has not been experimentally proven.

It localises to the periplasm. It carries out the reaction 2 Fe(II)-[cytochrome] + nitrate + 2 H(+) = 2 Fe(III)-[cytochrome] + nitrite + H2O. In terms of biological role, catalytic subunit of the periplasmic nitrate reductase complex NapAB. Receives electrons from NapB and catalyzes the reduction of nitrate to nitrite. In Actinobacillus pleuropneumoniae serotype 7 (strain AP76), this protein is Periplasmic nitrate reductase.